Reading from the N-terminus, the 152-residue chain is 3-dehydroquinate dehydratase (152 aa).

The active-site Proton acceptor is the Tyr26. Asn78, His84, and Asp91 together coordinate substrate. The active-site Proton donor is His104. Substrate contacts are provided by residues Leu105–Ser106 and Arg115.

The protein belongs to the type-II 3-dehydroquinase family. In terms of assembly, homododecamer.

The catalysed reaction is 3-dehydroquinate = 3-dehydroshikimate + H2O. Its pathway is metabolic intermediate biosynthesis; chorismate biosynthesis; chorismate from D-erythrose 4-phosphate and phosphoenolpyruvate: step 3/7. In terms of biological role, catalyzes a trans-dehydration via an enolate intermediate. This is 3-dehydroquinate dehydratase from Idiomarina loihiensis (strain ATCC BAA-735 / DSM 15497 / L2-TR).